Here is a 90-residue protein sequence, read N- to C-terminus: Small ribosomal subunit protein bS20 (90 aa).

Residues 1–11 (MANIKSSEKDI) show a composition bias toward basic and acidic residues. The disordered stretch occupies residues 1–29 (MANIKSSEKDIRRTKRRNAANSQNRSRLR).

It belongs to the bacterial ribosomal protein bS20 family.

In terms of biological role, binds directly to 16S ribosomal RNA. The chain is Small ribosomal subunit protein bS20 from Leptospira borgpetersenii serovar Hardjo-bovis (strain JB197).